The chain runs to 957 residues: Protein translocase subunit SecA (957 aa).

ATP contacts are provided by residues Gln86, 104 to 108 (GEGKT), and Asp494. Over residues 929-947 (SRPAPAPTAAASPDPSSAS) the composition is skewed to low complexity. The tract at residues 929–957 (SRPAPAPTAAASPDPSSASGVVEADFTEE) is disordered.

The protein belongs to the SecA family. Monomer and homodimer. Part of the essential Sec protein translocation apparatus which comprises SecA, SecYEG and auxiliary proteins SecDF. Other proteins may also be involved.

It localises to the cell inner membrane. The protein localises to the cellular thylakoid membrane. The protein resides in the cytoplasm. The enzyme catalyses ATP + H2O + cellular proteinSide 1 = ADP + phosphate + cellular proteinSide 2.. Part of the Sec protein translocase complex. Interacts with the SecYEG preprotein conducting channel. Has a central role in coupling the hydrolysis of ATP to the transfer of proteins into and across the cell membrane, serving as an ATP-driven molecular motor driving the stepwise translocation of polypeptide chains across the membrane. In terms of biological role, probably participates in protein translocation into and across both the cytoplasmic and thylakoid membranes in cyanobacterial cells. This chain is Protein translocase subunit SecA, found in Synechococcus sp. (strain JA-2-3B'a(2-13)) (Cyanobacteria bacterium Yellowstone B-Prime).